We begin with the raw amino-acid sequence, 315 residues long: tRNA-dihydrouridine(16) synthase (315 aa).

FMN contacts are provided by residues Pro-7–Glu-9 and Gln-68. Cys-98 (proton donor) is an active-site residue. FMN is bound by residues Lys-139, Asn-200–Glu-202, and Gly-224–Arg-225.

Belongs to the Dus family. DusC subfamily. FMN serves as cofactor.

The catalysed reaction is 5,6-dihydrouridine(16) in tRNA + NADP(+) = uridine(16) in tRNA + NADPH + H(+). It catalyses the reaction 5,6-dihydrouridine(16) in tRNA + NAD(+) = uridine(16) in tRNA + NADH + H(+). Functionally, catalyzes the synthesis of 5,6-dihydrouridine (D), a modified base found in the D-loop of most tRNAs, via the reduction of the C5-C6 double bond in target uridines. DusC specifically modifies U16 in tRNAs. In Escherichia coli (strain K12), this protein is tRNA-dihydrouridine(16) synthase.